Consider the following 422-residue polypeptide: Glutamate-1-semialdehyde 2,1-aminomutase (422 aa).

Lysine 258 bears the N6-(pyridoxal phosphate)lysine mark.

It belongs to the class-III pyridoxal-phosphate-dependent aminotransferase family. HemL subfamily. In terms of assembly, homodimer. It depends on pyridoxal 5'-phosphate as a cofactor.

It localises to the cytoplasm. The catalysed reaction is (S)-4-amino-5-oxopentanoate = 5-aminolevulinate. It functions in the pathway porphyrin-containing compound metabolism; protoporphyrin-IX biosynthesis; 5-aminolevulinate from L-glutamyl-tRNA(Glu): step 2/2. This Chlamydia trachomatis serovar D (strain ATCC VR-885 / DSM 19411 / UW-3/Cx) protein is Glutamate-1-semialdehyde 2,1-aminomutase.